Here is a 279-residue protein sequence, read N- to C-terminus: Very long chain fatty acid elongase 2 (279 aa).

Transmembrane regions (helical) follow at residues 12–32 (WFLL…LLSI), 50–70 (ILTL…VELV), 98–118 (VLWW…FFVL), 136–156 (MFNI…FFGP), 158–178 (LNSF…FPSM), 188–208 (LTQA…SAVV), and 213–233 (FPFG…ILFL). A Di-lysine motif motif is present at residues 276 to 279 (KKVQ).

This sequence belongs to the ELO family. ELOVL2 subfamily. In terms of assembly, interacts with TECR.

The protein localises to the endoplasmic reticulum membrane. The catalysed reaction is a very-long-chain acyl-CoA + malonyl-CoA + H(+) = a very-long-chain 3-oxoacyl-CoA + CO2 + CoA. The enzyme catalyses (7Z,10Z,13Z,16Z,19Z)-docosapentaenoyl-CoA + malonyl-CoA + H(+) = (9Z,12Z,15Z,18Z,21Z)-3-oxotetracosapentaenoyl-CoA + CO2 + CoA. It carries out the reaction (5Z,8Z,11Z,14Z,17Z)-eicosapentaenoyl-CoA + malonyl-CoA + H(+) = 3-oxo-(7Z,10Z,13Z,16Z,19Z)-docosapentaenoyl-CoA + CO2 + CoA. It catalyses the reaction (5Z,8Z,11Z,14Z)-eicosatetraenoyl-CoA + malonyl-CoA + H(+) = (7Z,10Z,13Z,16Z)-3-oxodocosatetraenoyl-CoA + CO2 + CoA. The catalysed reaction is (7Z,10Z,13Z,16Z)-docosatetraenoyl-CoA + malonyl-CoA + H(+) = (9Z,12Z,15Z,18Z)-3-oxotetracosatetraenoyl-CoA + CO2 + CoA. It functions in the pathway lipid metabolism; polyunsaturated fatty acid biosynthesis. Catalyzes the first and rate-limiting reaction of the four reactions that constitute the long-chain fatty acids elongation cycle. This endoplasmic reticulum-bound enzymatic process allows the addition of 2 carbons to the chain of long- and very long-chain fatty acids (VLCFAs) per cycle. Condensing enzyme that catalyzes the synthesis of polyunsaturated very long chain fatty acid (C20- and C22-PUFA), acting specifically toward polyunsaturated acyl-CoA with the higher activity toward C20:4(n-6) acyl-CoA. May participate in the production of polyunsaturated VLCFAs of different chain lengths that are involved in multiple biological processes as precursors of membrane lipids and lipid mediators. This is Very long chain fatty acid elongase 2 from Rattus norvegicus (Rat).